Reading from the N-terminus, the 212-residue chain is ER lumen protein-retaining receptor 1 (212 aa).

Over 1–4 (MNLF) the chain is Lumenal. A helical transmembrane segment spans residues 5–24 (RFLGDLSHLLAIILLLLKIW). Residues 25-32 (KSRSCAGI) lie on the Cytoplasmic side of the membrane. Residues 33 to 52 (SGKSQVLFAVVFTARYLDLF) form a helical membrane-spanning segment. The tract at residues 47 to 48 (RY) is interaction with the K-D-E-L motif on target proteins. Topologically, residues 53–58 (TNYISL) are lumenal. A helical transmembrane segment spans residues 59–79 (YNTCMKVVYIACSFTTVWLIY). The Cytoplasmic portion of the chain corresponds to 80–92 (SKFKATYDGNHDT). Residues 93-110 (FRVEFLVVPTAILAFLVN) traverse the membrane as a helical segment. The Lumenal portion of the chain corresponds to 111–116 (HDFTPL). The helical transmembrane segment at 117-135 (EILWTFSIYLESVAILPQL) threads the bilayer. Residues 136 to 149 (FMVSKTGEAETITS) are Cytoplasmic-facing. A helical membrane pass occupies residues 150-168 (HYLFALGVYRTLYLFNWIW). The tract at residues 159–169 (RTLYLFNWIWR) is interaction with the K-D-E-L motif on target proteins. At 169 to 178 (RYHFEGFFDL) the chain is on the lumenal side. A helical transmembrane segment spans residues 179–199 (IAIVAGLVQTVLYCDFFYLYI). Over 200-212 (TKVLKGKKLSLPA) the chain is Cytoplasmic. Residues 204–207 (KGKK) form an important for recycling of cargo proteins with the sequence motif K-D-E-L from the Golgi to the endoplasmic reticulum region. At Ser209 the chain carries Phosphoserine; by PKA.

It belongs to the ERD2 family. In terms of assembly, upon ligand binding the receptor oligomerizes and interacts with components of the transport machinery such as ARFGAP1 and ARF1. Phosphorylation by PKA at Ser-209 is required for endoplasmic reticulum retention function.

The protein resides in the golgi apparatus membrane. The protein localises to the cytoplasmic vesicle. It localises to the COPI-coated vesicle membrane. Its subcellular location is the endoplasmic reticulum membrane. It is found in the endoplasmic reticulum-Golgi intermediate compartment membrane. In terms of biological role, receptor for the C-terminal sequence motif K-D-E-L that is present on endoplasmic reticulum resident proteins and that mediates their recycling from the Golgi back to the endoplasmic reticulum. This is ER lumen protein-retaining receptor 1 (KDELR1) from Homo sapiens (Human).